The primary structure comprises 342 residues: Epoxide hydrolase srdG (342 aa).

One can recognise an AB hydrolase-1 domain in the interval 44-332; that stretch reads ATVLLLHGWP…LIHTPEEVNK (289 aa). Asp-122 (nucleophile) is an active-site residue. His-320 functions as the Proton acceptor in the catalytic mechanism.

It belongs to the AB hydrolase superfamily. Epoxide hydrolase family.

In terms of biological role, highly reducing polyketide synthase; part of the gene cluster that mediates the biosynthesis of sordarial, a salicylic aldehyde structurally related to the phytotoxin pyriculol. The most interesting aspect of this pathway is formation of an aromatic product from the highly reducing polyketide synthase srdA. SrdA synthesizes a reduced polyketide chain from one molecule of acetyl-CoA and five molecules of malonyl-CoA. The polyketide chain is then reductively released as an aldehyde. The oxidoreductases srdC, srdD and srdE then oxidize one of the hydroxy groups to facilitate the intramolecular aldol condensation, followed by dehydration to yield a salicylic aldehyde. This aldehyde can undergo facile reduction by endogenous reductases to yield the alcohol 1-hydroxy-2-hydroxymethyl-3-pent-1,3-dienylbenzene. The flavin-dependent srdI counteract against the propensity of the aldehydes to be reduced under physiological conditions and is responsible for reoxidizing 1-hydroxy-2-hydroxymethyl-3-pent-1,3-dienylbenzene back to the salicylic aldehyde. This salicylic aldehyde is then selectively epoxidized by the cupin-domain-containing oxidoreductase srdB to yield the epoxide, which can be hydrolyzed stereoselectively by the hydrolase srdG to give the final product sordarial. The protein is Epoxide hydrolase srdG of Neurospora crassa (strain ATCC 24698 / 74-OR23-1A / CBS 708.71 / DSM 1257 / FGSC 987).